We begin with the raw amino-acid sequence, 53 residues long: UPF0391 membrane protein YtjA (53 aa).

A run of 2 helical transmembrane segments spans residues 4-24 (WGIIFLVIALIAAALGFGGLA) and 30-48 (AAKIVFVVGIVLFLVSLFM).

It belongs to the UPF0391 family.

It localises to the cell membrane. The polypeptide is UPF0391 membrane protein YtjA (Salmonella agona (strain SL483)).